A 204-amino-acid polypeptide reads, in one-letter code: NAD(P)H-quinone oxidoreductase subunit M, chloroplastic (204 aa).

The transit peptide at 1–27 (MASTSMSLTRACKVHAVLACSIPSVSS) directs the protein to the chloroplast.

The protein belongs to the NDH complex subunit M family. Part of the chloroplast NDH complex, composed of a mixture of chloroplast and nucleus encoded subunits. Component of the NDH subcomplex A, at least composed of ndhH, ndhI, ndhJ, ndhK, ndhL, ndhM, ndhN and ndhO.

The protein localises to the plastid. Its subcellular location is the chloroplast thylakoid membrane. The enzyme catalyses a plastoquinone + NADH + (n+1) H(+)(in) = a plastoquinol + NAD(+) + n H(+)(out). It carries out the reaction a plastoquinone + NADPH + (n+1) H(+)(in) = a plastoquinol + NADP(+) + n H(+)(out). In terms of biological role, NDH shuttles electrons from NAD(P)H:plastoquinone, via FMN and iron-sulfur (Fe-S) centers, to quinones in the photosynthetic chain and possibly in a chloroplast respiratory chain. The immediate electron acceptor for the enzyme in this species is believed to be plastoquinone. Couples the redox reaction to proton translocation, and thus conserves the redox energy in a proton gradient. This chain is NAD(P)H-quinone oxidoreductase subunit M, chloroplastic, found in Physcomitrium patens (Spreading-leaved earth moss).